The chain runs to 459 residues: Interleukin-7 receptor subunit alpha (459 aa).

The first 20 residues, 1–20 (MMALGRAFAIVFCLIQAVSG), serve as a signal peptide directing secretion. Over 21 to 239 (ESGNAQDGDL…PEPKNQGGWD (219 aa)) the chain is Extracellular. Cys-42 and Cys-57 form a disulfide bridge. The N-linked (GlcNAc...) asparagine glycan is linked to Asn-60. 2 cysteine pairs are disulfide-bonded: Cys-74-Cys-82 and Cys-108-Cys-118. Residues Asn-115 and Asn-177 are each glycosylated (N-linked (GlcNAc...) asparagine). One can recognise a Fibronectin type-III domain in the interval 131–232 (APSDLKVVYR…PSSTFETPEP (102 aa)). A WSXWS motif motif is present at residues 218-222 (WSEWS). Residues 240-264 (PVLPSVTILSLFSVFLLVILAHVLW) traverse the membrane as a helical segment. Residues 265–459 (KKRIKPVVWP…VTMSSFYQNK (195 aa)) lie on the Cytoplasmic side of the membrane. The Box 1 motif motif lies at 272–280 (VWPSLPDHK). Thr-282 bears the Phosphothreonine; by PKC mark. Disordered regions lie at residues 337 to 365 (TQGH…RRES) and 378 to 413 (NAPP…NTNV). Positions 347-357 (ANRSPETSVSP) are enriched in polar residues. Basic and acidic residues predominate over residues 388 to 397 (PDYRDGDRNR).

It belongs to the type I cytokine receptor family. Type 4 subfamily. The IL7 receptor is a heterodimer of IL7R and IL2RG. The TSLP receptor is a heterodimer of CRLF2 and IL7R. Interacts with CD53. Post-translationally, N-glycosylated IL-7Ralpha binds IL7 300-fold more tightly than the unglycosylated form. In terms of processing, ubiquitinated by MARCHF8; leading to lysosomal degradation. Spleen, thymus and fetal liver.

The protein resides in the membrane. Receptor for interleukin-7. Also acts as a receptor for thymic stromal lymphopoietin (TSLP). This is Interleukin-7 receptor subunit alpha (Il7r) from Mus musculus (Mouse).